Reading from the N-terminus, the 360-residue chain is uncharacterized protein (360 aa).

This is an uncharacterized protein from Escherichia coli (strain UTI89 / UPEC).